Reading from the N-terminus, the 522-residue chain is Probable cytosolic Fe-S cluster assembly factor narfl (522 aa).

Positions 26, 73, 76, 79, 205, 281, 439, and 443 each coordinate [4Fe-4S] cluster.

It belongs to the NARF family.

In terms of biological role, component of the cytosolic iron-sulfur (Fe/S) protein assembly machinery. Required for maturation of extramitochondrial Fe/S proteins. In Dictyostelium discoideum (Social amoeba), this protein is Probable cytosolic Fe-S cluster assembly factor narfl (narfl).